Here is a 434-residue protein sequence, read N- to C-terminus: Citrate-proton symporter (434 aa).

Topologically, residues 1–21 are cytoplasmic; sequence MAQHTPATSRAGTFGAILRVT. The chain crosses the membrane as a helical span at residues 22–42; sequence SGNFLEQFDFFLFGFYATYIA. The Periplasmic portion of the chain corresponds to 43 to 54; sequence RTFFPAESEFAS. The helical transmembrane segment at 55–75 threads the bilayer; that stretch reads LMLTFAVFGSGFLMRPVGAIV. The Cytoplasmic segment spans residues 76–87; it reads LGAYIDRIGRRK. A helical transmembrane segment spans residues 88-108; sequence GLMVTLAIMGCGTLLIALVPG. The Periplasmic portion of the chain corresponds to 109 to 111; sequence YQT. Residues 112-132 form a helical membrane-spanning segment; sequence IGLAAPALVLLGRLLQGFSAG. The Cytoplasmic portion of the chain corresponds to 133–164; it reads VELGGVSVYLSEIATPGNKGFYTSWQSASQQV. The helical transmembrane segment at 165–185 threads the bilayer; that stretch reads AIVVAALIGYSLNITLGHDAI. Position 186 (Ser186) is a topological domain, periplasmic. Residues 187–207 traverse the membrane as a helical segment; sequence EWGWRIPFFIGCMIIPLIFVL. Residues 208 to 238 are Cytoplasmic-facing; that stretch reads RRSLQETEAFLQRKHRPDTREIFATIAKNWR. A helical transmembrane segment spans residues 239-259; sequence IITAGTLLVAMTTTTFYFITV. The Periplasmic portion of the chain corresponds to 260 to 276; it reads YTPTYGRTVLNLSARDS. The helical transmembrane segment at 277–297 threads the bilayer; the sequence is LIVTMLVGVSNFIWLPIGGAI. Residues 298 to 304 lie on the Cytoplasmic side of the membrane; sequence SDRIGRR. A helical transmembrane segment spans residues 305–325; sequence AVLMGITLLALITTWPVMQWL. Residues 326–335 are Periplasmic-facing; sequence TAAPDFTRMT. A helical membrane pass occupies residues 336-356; that stretch reads LVLLWFSFFFGMYNGAMVAAL. Over 357–366 the chain is Cytoplasmic; that stretch reads TEVMPVYVRT. Residues 367-387 form a helical membrane-spanning segment; it reads VGFSLAFSLATAIFGGLTPAI. Residues 388–400 lie on the Periplasmic side of the membrane; the sequence is STALVKLTGDKSS. The helical transmembrane segment at 401–421 threads the bilayer; that stretch reads PGWWLMCAALCGLAATAMLFV. The Cytoplasmic segment spans residues 422–434; sequence RLSRGYIAAENKA.

The protein belongs to the major facilitator superfamily. Metabolite:H+ Symporter (MHS) family (TC 2.A.1.6) family.

The protein resides in the cell inner membrane. Uptake of citrate across the boundary membrane with the concomitant transport of protons into the cell (symport system). This chain is Citrate-proton symporter (citA), found in Salmonella typhi.